Here is a 388-residue protein sequence, read N- to C-terminus: Chaperone protein DnaJ (388 aa).

Residues 5–69 (DYYDVLGVDK…QKKAQYDQFG (65 aa)) form the J domain. A CR-type zinc finger spans residues 145 to 227 (GKKTDITYTR…CHGKGTIDKK (83 aa)). Zn(2+) contacts are provided by Cys158, Cys161, Cys175, Cys178, Cys201, Cys204, Cys215, and Cys218. CXXCXGXG motif repeat units follow at residues 158–165 (CPTCDGSG), 175–182 (CDKCHGTG), 201–208 (CDKCGGRG), and 215–222 (CQTCHGKG).

It belongs to the DnaJ family. As to quaternary structure, homodimer. Zn(2+) is required as a cofactor.

It localises to the cytoplasm. Functionally, participates actively in the response to hyperosmotic and heat shock by preventing the aggregation of stress-denatured proteins and by disaggregating proteins, also in an autonomous, DnaK-independent fashion. Unfolded proteins bind initially to DnaJ; upon interaction with the DnaJ-bound protein, DnaK hydrolyzes its bound ATP, resulting in the formation of a stable complex. GrpE releases ADP from DnaK; ATP binding to DnaK triggers the release of the substrate protein, thus completing the reaction cycle. Several rounds of ATP-dependent interactions between DnaJ, DnaK and GrpE are required for fully efficient folding. Also involved, together with DnaK and GrpE, in the DNA replication of plasmids through activation of initiation proteins. This chain is Chaperone protein DnaJ, found in Lactobacillus gasseri (strain ATCC 33323 / DSM 20243 / BCRC 14619 / CIP 102991 / JCM 1131 / KCTC 3163 / NCIMB 11718 / NCTC 13722 / AM63).